The sequence spans 292 residues: ATP synthase gamma chain (292 aa).

The protein belongs to the ATPase gamma chain family. F-type ATPases have 2 components, CF(1) - the catalytic core - and CF(0) - the membrane proton channel. CF(1) has five subunits: alpha(3), beta(3), gamma(1), delta(1), epsilon(1). CF(0) has three main subunits: a, b and c.

It localises to the cell membrane. Functionally, produces ATP from ADP in the presence of a proton gradient across the membrane. The gamma chain is believed to be important in regulating ATPase activity and the flow of protons through the CF(0) complex. This is ATP synthase gamma chain from Streptococcus suis (strain 05ZYH33).